The following is a 357-amino-acid chain: Prostaglandin E2 receptor EP2 subtype (357 aa).

At 1–24 the chain is on the extracellular side; that stretch reads MDNSFNDSRRVENCESRQYLLSDE. The N-linked (GlcNAc...) asparagine glycan is linked to asparagine 6. Residues 25–48 traverse the membrane as a helical segment; sequence SPAISSVMFTAGVLGNLIALALLA. The Cytoplasmic segment spans residues 49-66; the sequence is RRWRGDTGCSAGSRTSIS. A helical transmembrane segment spans residues 67-92; that stretch reads LFHVLVTELVLTDLLGTCLISPVVLA. The Extracellular segment spans residues 93–112; that stretch reads SYSRNQTLVALAPESRACTY. Residues cysteine 110 and cysteine 188 are joined by a disulfide bond. Residues 113 to 133 form a helical membrane-spanning segment; that stretch reads FAFTMTFFSLATMLMLFAMAL. The Cytoplasmic portion of the chain corresponds to 134 to 152; the sequence is ERYLAIGHPYFYRRRVSRR. The helical transmembrane segment at 153–177 threads the bilayer; that stretch reads GGLAVLPAIYGVSLLFCSLPLLNYG. The Extracellular portion of the chain corresponds to 178 to 199; the sequence is EYVQYCPGTWCFIQHGRTAYLQ. A helical membrane pass occupies residues 200 to 224; the sequence is LYATVLLLLIVAVLGCNISVILNLI. The Cytoplasmic portion of the chain corresponds to 225–262; the sequence is RMQLRSKRSRCGLSGSSLRGPGSRRRGERTSMAEETDH. The segment covering 235–245 has biased composition (low complexity); sequence CGLSGSSLRGP. The disordered stretch occupies residues 235–255; that stretch reads CGLSGSSLRGPGSRRRGERTS. The chain crosses the membrane as a helical span at residues 263–286; it reads LILLAIMTITFAVCSLPFTIFAYM. Topologically, residues 287-299 are extracellular; it reads DETSSRKEKWDLR. A helical membrane pass occupies residues 300–323; the sequence is ALRFLSVNSIIDPWVFVILRPPVL. Residues 324-357 lie on the Cytoplasmic side of the membrane; sequence RLMRSVLCCRTSLRAPEAPGASCSTQQTDLCGQL.

The protein belongs to the G-protein coupled receptor 1 family.

The protein localises to the cell membrane. Receptor for prostaglandin E2 (PGE2). The activity of this receptor is mediated by G(s) proteins that stimulate adenylate cyclase. The subsequent raise in intracellular cAMP is responsible for the relaxing effect of this receptor on smooth muscle. The polypeptide is Prostaglandin E2 receptor EP2 subtype (Ptger2) (Rattus norvegicus (Rat)).